A 672-amino-acid chain; its full sequence is Acetyl-coenzyme A synthetase (672 aa).

Residues 205–208 and threonine 325 each bind CoA; that span reads RGGK. ATP-binding positions include 401 to 403, 425 to 430, aspartate 516, and arginine 531; these read GEP and DTYWQT. Serine 539 is a binding site for CoA. Arginine 542 contacts ATP. Arginine 600 contributes to the CoA binding site.

It belongs to the ATP-dependent AMP-binding enzyme family.

The enzyme catalyses acetate + ATP + CoA = acetyl-CoA + AMP + diphosphate. This Phycomyces blakesleeanus (strain ATCC 8743b / DSM 1359 / FGSC 10004 / NBRC 33097 / NRRL 1555) protein is Acetyl-coenzyme A synthetase (facA).